The sequence spans 584 residues: Probable lysosomal cobalamin transporter (584 aa).

The next 10 membrane-spanning stretches (helical) occupy residues 8–28 (LIWIVYAIVVGILSIVASTFV), 46–66 (IFTLTALLATVLLLPVDVALV), 93–113 (TVVYYFLYSLDAVLCLLIVPF), 144–164 (TLVFILLTIILFLVGFFVPVA), 189–209 (ALTFALGLLIVMGIIVYVIYS), 313–333 (LLGGLLLLAISVMIWISMLLT), 350–370 (ILGKINIINPVNWVLVEAASV), 376–396 (VIFIVLVLHLFTSSVVGIATI), 421–441 (ATVMLTLITLALNYSISMIVV), and 509–529 (GIVDFWAQFVFLGFSLIVLLI).

The protein belongs to the LIMR family. LMBRD1 subfamily.

It localises to the lysosome membrane. Probable lysosomal cobalamin transporter. Required to export cobalamin from lysosomes allowing its conversion to cofactors. The protein is Probable lysosomal cobalamin transporter of Coccidioides immitis (strain RS) (Valley fever fungus).